The sequence spans 1175 residues: uncharacterized protein (1175 aa).

An ATP-binding site is contributed by glycine 586–threonine 593.

This is an uncharacterized protein from Methanocaldococcus jannaschii (strain ATCC 43067 / DSM 2661 / JAL-1 / JCM 10045 / NBRC 100440) (Methanococcus jannaschii).